The sequence spans 110 residues: Large ribosomal subunit protein uL22 (110 aa).

The protein belongs to the universal ribosomal protein uL22 family. Part of the 50S ribosomal subunit.

Its function is as follows. This protein binds specifically to 23S rRNA; its binding is stimulated by other ribosomal proteins, e.g. L4, L17, and L20. It is important during the early stages of 50S assembly. It makes multiple contacts with different domains of the 23S rRNA in the assembled 50S subunit and ribosome. The globular domain of the protein is located near the polypeptide exit tunnel on the outside of the subunit, while an extended beta-hairpin is found that lines the wall of the exit tunnel in the center of the 70S ribosome. In Yersinia enterocolitica serotype O:8 / biotype 1B (strain NCTC 13174 / 8081), this protein is Large ribosomal subunit protein uL22.